A 54-amino-acid chain; its full sequence is Ferredoxin (54 aa).

4Fe-4S ferredoxin-type domains lie at 2-28 (HVISDECVKCGACASTCPTGAIEEGET) and 29-54 (KYVVTDSCIDCGACEAVCPTGAISAE). C8, C11, C14, C18, C36, C39, C42, and C46 together coordinate [4Fe-4S] cluster.

It depends on [4Fe-4S] cluster as a cofactor.

Its function is as follows. Ferredoxins are iron-sulfur proteins that transfer electrons in a wide variety of metabolic reactions. This chain is Ferredoxin, found in Megasphaera elsdenii.